We begin with the raw amino-acid sequence, 626 residues long: Basic helix-loop-helix ARNT-like protein 1 (626 aa).

The interval 1–58 (MADQRMDISSTISDFMSPGPTDLLSGSLSTSGVDCNRKRKGSATDYQESMDTDKDDPH) is disordered. Ser-17 is modified (phosphoserine; by GSK3-beta). Residues 17–32 (SPGPTDLLSGSLSTSG) are compositionally biased toward low complexity. The residue at position 21 (Thr-21) is a Phosphothreonine; by GSK3-beta. Positions 36 to 41 (NRKRKG) match the Nuclear localization signal motif. Residues 72-125 (NAREAHSQIEKRRRDKMNSFIDELASLVPTCNAMSRKLDKLTVLRMAVQHMKTL) form the bHLH domain. Ser-78 is subject to Phosphoserine. Ser-90 carries the post-translational modification Phosphoserine; by CK2. Residues 142–152 (LSDDELKHLIL) carry the Nuclear export signal 1 motif. A PAS 1 domain is found at 143 to 215 (SDDELKHLIL…EQLSSSDTAP (73 aa)). Lys-252 participates in a covalent cross-link: Glycyl lysine isopeptide (Lys-Gly) (interchain with G-Cter in SUMO2 and SUMO3). Lys-259 is covalently cross-linked (Glycyl lysine isopeptide (Lys-Gly) (interchain with G-Cter in SUMO); alternate). Lys-259 is covalently cross-linked (Glycyl lysine isopeptide (Lys-Gly) (interchain with G-Cter in SUMO2); alternate). A PAS 2 domain is found at 326–396 (PQPVNGEIRV…ECHRQVLQTR (71 aa)). A Nuclear export signal 2 motif is present at residues 361–369 (LAYLPQELL). The PAC domain maps to 401–444 (TNCYKFKIKDGSFITLRSRWFSFMNPWTKEVEYIVSTNTVVLAN). Disordered regions lie at residues 459–492 (SPHS…RAGA) and 511–595 (GSSP…SPSN). An interaction with CIART region spans residues 508–588 (RIRGSSPSSC…IGIDMIDNDQ (81 aa)). A compositionally biased stretch (low complexity) spans 511–521 (GSSPSSCGSSP). Lys-538 is modified (N6-acetyllysine).

As to quaternary structure, component of the circadian clock oscillator which includes the CRY1/2 proteins, CLOCK or NPAS2, BMAL1 or BMAL2, CSNK1D and/or CSNK1E, TIMELESS and the PER1/2/3 proteins. Forms a heterodimer with CLOCK. The CLOCK-BMAL1 heterodimer is required for E-box-dependent transactivation, for CLOCK nuclear translocation and degradation, and, for phosphorylation of both CLOCK and BMAL1. Part of a nuclear complex which also includes RACK1 and PRKCA; RACK1 and PRKCA are recruited to the complex in a circadian manner. Interacts with NPAS2. Interacts with EZH2. Interacts with SUMO3. Interacts with SIRT1. Interacts with AHR. Interacts with ID1, ID2 and ID3. Interacts with DDX4. Interacts with OGT. Interacts with EED and SUZ12. Interacts with MTA1. Interacts with CIART. Interacts with HSP90. Interacts with KAT2B and EP300. Interacts with BHLHE40/DEC1 and BHLHE41/DEC2. Interacts with RELB and the interaction is enhanced in the presence of CLOCK. Interacts with PER1, PER2, CRY1 and CRY2 and this interaction requires a translocation to the nucleus. Interaction of the CLOCK-BMAL1 heterodimer with PER or CRY inhibits transcription activation. Interaction of the CLOCK-BMAL1 with CRY1 is independent of DNA but with PER2 is off DNA. The CLOCK-BMAL1 heterodimer interacts with GSK3B. Interacts with KDM5A. Interacts with KMT2A; in a circadian manner. Interacts with UBE3A. Interacts with PRKCG. Interacts with MAGEL2. Interacts with NCOA2. Interacts with THRAP3. The CLOCK-BMAL1 heterodimer interacts with PASD1. Interacts with PASD1. Interacts with USP9X. Interacts with PIWIL2 (via PIWI domain). Interacts with HDAC3. Interacts with HNF4A. Ubiquitinated, leading to its proteasomal degradation. Deubiquitinated by USP9X. In terms of processing, O-glycosylated; contains O-GlcNAc. O-glycosylation by OGT prevents protein degradation by inhibiting ubiquitination. It also stabilizes the CLOCK-BMAL1 heterodimer thereby increasing CLOCK-BMAL1-mediated transcription of genes in the negative loop of the circadian clock such as PER1/2/3 and CRY1/2. Post-translationally, acetylated on Lys-538 by CLOCK during the repression phase of the circadian cycle. Acetylation facilitates recruitment of CRY1 protein and initiates the repression phase of the circadian cycle. Acetylated at Lys-538 by KAT5 during the activation phase of the cycle, leading to recruitment of the positive transcription elongation factor b (P-TEFb) and BRD4, followed by productive elongation of circadian transcripts. Deacetylated by SIRT1, which may result in decreased protein stability. Phosphorylated upon dimerization with CLOCK. Phosphorylation enhances the transcriptional activity, alters the subcellular localization and decreases the stability of the CLOCK-BMAL1 heterodimer by promoting its degradation. Phosphorylation shows circadian variations in the liver with a peak between CT10 to CT14. Phosphorylation at Ser-90 by CK2 is essential for its nuclear localization, its interaction with CLOCK and controls CLOCK nuclear entry. Dephosphorylation at Ser-78 is important for dimerization with CLOCK and transcriptional activity. In terms of processing, sumoylated on Lys-259 upon dimerization with CLOCK. Predominantly conjugated to poly-SUMO2/3 rather than SUMO1 and the level of these conjugates undergo rhythmic variation, peaking at CT9-CT12. Sumoylation localizes it exclusively to the PML body and promotes its ubiquitination in the PML body, ubiquitin-dependent proteasomal degradation and the transcriptional activity of the CLOCK-BMAL1 heterodimer. Post-translationally, undergoes lysosome-mediated degradation in a time-dependent manner in the liver.

Its subcellular location is the nucleus. It localises to the cytoplasm. The protein localises to the PML body. Functionally, transcriptional activator which forms a core component of the circadian clock. The circadian clock, an internal time-keeping system, regulates various physiological processes through the generation of approximately 24 hour circadian rhythms in gene expression, which are translated into rhythms in metabolism and behavior. It is derived from the Latin roots 'circa' (about) and 'diem' (day) and acts as an important regulator of a wide array of physiological functions including metabolism, sleep, body temperature, blood pressure, endocrine, immune, cardiovascular, and renal function. Consists of two major components: the central clock, residing in the suprachiasmatic nucleus (SCN) of the brain, and the peripheral clocks that are present in nearly every tissue and organ system. Both the central and peripheral clocks can be reset by environmental cues, also known as Zeitgebers (German for 'timegivers'). The predominant Zeitgeber for the central clock is light, which is sensed by retina and signals directly to the SCN. The central clock entrains the peripheral clocks through neuronal and hormonal signals, body temperature and feeding-related cues, aligning all clocks with the external light/dark cycle. Circadian rhythms allow an organism to achieve temporal homeostasis with its environment at the molecular level by regulating gene expression to create a peak of protein expression once every 24 hours to control when a particular physiological process is most active with respect to the solar day. Transcription and translation of core clock components (CLOCK, NPAS2, BMAL1, BMAL2, PER1, PER2, PER3, CRY1 and CRY2) plays a critical role in rhythm generation, whereas delays imposed by post-translational modifications (PTMs) are important for determining the period (tau) of the rhythms (tau refers to the period of a rhythm and is the length, in time, of one complete cycle). A diurnal rhythm is synchronized with the day/night cycle, while the ultradian and infradian rhythms have a period shorter and longer than 24 hours, respectively. Disruptions in the circadian rhythms contribute to the pathology of cardiovascular diseases, cancer, metabolic syndromes and aging. A transcription/translation feedback loop (TTFL) forms the core of the molecular circadian clock mechanism. Transcription factors, CLOCK or NPAS2 and BMAL1 or BMAL2, form the positive limb of the feedback loop, act in the form of a heterodimer and activate the transcription of core clock genes and clock-controlled genes (involved in key metabolic processes), harboring E-box elements (5'-CACGTG-3') within their promoters. The core clock genes: PER1/2/3 and CRY1/2 which are transcriptional repressors form the negative limb of the feedback loop and interact with the CLOCK|NPAS2-BMAL1|BMAL2 heterodimer inhibiting its activity and thereby negatively regulating their own expression. This heterodimer also activates nuclear receptors NR1D1/2 and RORA/B/G, which form a second feedback loop and which activate and repress BMAL1 transcription, respectively. BMAL1 positively regulates myogenesis and negatively regulates adipogenesis via the transcriptional control of the genes of the canonical Wnt signaling pathway. Plays a role in normal pancreatic beta-cell function; regulates glucose-stimulated insulin secretion via the regulation of antioxidant genes NFE2L2/NRF2 and its targets SESN2, PRDX3, CCLC and CCLM. Negatively regulates the mTORC1 signaling pathway; regulates the expression of MTOR and DEPTOR. Controls diurnal oscillations of Ly6C inflammatory monocytes; rhythmic recruitment of the PRC2 complex imparts diurnal variation to chemokine expression that is necessary to sustain Ly6C monocyte rhythms. Regulates the expression of HSD3B2, STAR, PTGS2, CYP11A1, CYP19A1 and LHCGR in the ovary and also the genes involved in hair growth. Plays an important role in adult hippocampal neurogenesis by regulating the timely entry of neural stem/progenitor cells (NSPCs) into the cell cycle and the number of cell divisions that take place prior to cell-cycle exit. Regulates the circadian expression of CIART and KLF11. The CLOCK-BMAL1 heterodimer regulates the circadian expression of SERPINE1/PAI1, VWF, B3, CCRN4L/NOC, NAMPT, DBP, MYOD1, PPARGC1A, PPARGC1B, SIRT1, GYS2, F7, NGFR, GNRHR, BHLHE40/DEC1, ATF4, MTA1, KLF10 and also genes implicated in glucose and lipid metabolism. Promotes rhythmic chromatin opening, regulating the DNA accessibility of other transcription factors. May play a role in spermatogenesis; contributes to the chromatoid body assembly and physiology. The NPAS2-BMAL1 heterodimer positively regulates the expression of MAOA, F7 and LDHA and modulates the circadian rhythm of daytime contrast sensitivity by regulating the rhythmic expression of adenylate cyclase type 1 (ADCY1) in the retina. The preferred binding motif for the CLOCK-BMAL1 heterodimer is 5'-CACGTGA-3', which contains a flanking adenine nucleotide at the 3-prime end of the canonical 6-nucleotide E-box sequence. CLOCK specifically binds to the half-site 5'-CAC-3', while BMAL1 binds to the half-site 5'-GTGA-3'. The CLOCK-BMAL1 heterodimer also recognizes the non-canonical E-box motifs 5'-AACGTGA-3' and 5'-CATGTGA-3'. Essential for the rhythmic interaction of CLOCK with ASS1 and plays a critical role in positively regulating CLOCK-mediated acetylation of ASS1. Plays a role in protecting against lethal sepsis by limiting the expression of immune checkpoint protein CD274 in macrophages in a PKM2-dependent manner. Regulates the diurnal rhythms of skeletal muscle metabolism via transcriptional activation of genes promoting triglyceride synthesis (DGAT2) and metabolic efficiency (COQ10B). The protein is Basic helix-loop-helix ARNT-like protein 1 of Rattus norvegicus (Rat).